We begin with the raw amino-acid sequence, 490 residues long: Protein LMBR1L (490 aa).

Topologically, residues 1 to 21 are extracellular; sequence MEAPDYEVLSVREQLFHERIR. Residues 1-59 form an interaction with LGB region; sequence MEAPDYEVLSVREQLFHERIRECIISTLLFATLYILCHIFLTRFKKPAEFTTVDDEDAT. The interval 1–76 is LCN1-binding; that stretch reads MEAPDYEVLS…LCTFTLAIAL (76 aa). The helical transmembrane segment at 22–42 threads the bilayer; that stretch reads ECIISTLLFATLYILCHIFLT. The Cytoplasmic segment spans residues 43–66; that stretch reads RFKKPAEFTTVDDEDATVNKIALE. A helical membrane pass occupies residues 67–87; it reads LCTFTLAIALGAVLLLPFSII. Residues 88–114 are Extracellular-facing; sequence SNEVLLSLPRNYYIQWLNGSLIHGLWN. The chain crosses the membrane as a helical span at residues 115–135; the sequence is LVFLFSNLSLIFLMPFAYFFT. Over 136–154 the chain is Cytoplasmic; it reads ESEGFAGSRRGVLGRVYET. Residues 155 to 175 traverse the membrane as a helical segment; it reads VVMLMLLTLLVLGMVWVASAI. Over 176–196 the chain is Extracellular; that stretch reads LDNNKASRESLYDFWEYYLPY. Residues 197–217 traverse the membrane as a helical segment; sequence LYSCISFLGVLLLLVCTPLGL. Over 218–305 the chain is Cytoplasmic; the sequence is ARMFSVTGKL…NLGYPLAMLC (88 aa). The helical transmembrane segment at 306 to 326 threads the bilayer; that stretch reads LLVLTGLSVLIVAIHILELLI. Residues 327–350 are Extracellular-facing; that stretch reads DEAAMPRGMQDASLGQVSFSRLGS. Residues 351–371 traverse the membrane as a helical segment; that stretch reads FGAVIQVALIFYLMVSSVVGF. The Cytoplasmic portion of the chain corresponds to 372 to 388; it reads YSSPLFRSLRPRWHDTA. The helical transmembrane segment at 389 to 409 threads the bilayer; sequence MTQIIGNCVCLLVLSSALPVF. The Extracellular portion of the chain corresponds to 410–431; sequence SRTLGLTRFDLLGDFGRFNWLG. A helical transmembrane segment spans residues 432-452; that stretch reads NFYIVFLYNAAFAGLTTLCLV. The Cytoplasmic portion of the chain corresponds to 453–490; sequence KTFTAAVRAELIRAFGLDRLPLPVSGFPPRASRKTQHQ.

The protein belongs to the LIMR family. In terms of assembly, dimer. Can also form higher oligomers. Interacts with LCN1; this interaction mediates the endocytosis of LCN1. Interacts with UBAC2, FAF2, VCP, AMFR, ZNRF3, CTNNB1, LRP6, GSK3A, GSK3B, FZD6, DVL2 and RNF43. Interaction with LGB and SCGB1A1 is controversial.

The protein localises to the cell membrane. Its subcellular location is the endoplasmic reticulum membrane. Plays an essential role in lymphocyte development by negatively regulating the canonical Wnt signaling pathway. In association with UBAC2 and E3 ubiquitin-protein ligase AMFR, promotes the ubiquitin-mediated degradation of CTNNB1 and Wnt receptors FZD6 and LRP6. LMBR1L stabilizes the beta-catenin destruction complex that is required for regulating CTNNB1 levels. Acts as a LCN1 receptor and can mediate its endocytosis. This is Protein LMBR1L (LMBR1L) from Pongo abelii (Sumatran orangutan).